Here is a 370-residue protein sequence, read N- to C-terminus: DNA replication and repair protein RecF (370 aa).

ATP is bound at residue 30 to 37; it reads GENAQGKT.

This sequence belongs to the RecF family.

It localises to the cytoplasm. In terms of biological role, the RecF protein is involved in DNA metabolism; it is required for DNA replication and normal SOS inducibility. RecF binds preferentially to single-stranded, linear DNA. It also seems to bind ATP. The sequence is that of DNA replication and repair protein RecF from Bacillus velezensis (strain DSM 23117 / BGSC 10A6 / LMG 26770 / FZB42) (Bacillus amyloliquefaciens subsp. plantarum).